We begin with the raw amino-acid sequence, 373 residues long: Transmembrane protein adipocyte-associated 1 (373 aa).

2 N-linked (GlcNAc...) asparagine glycosylation sites follow: asparagine 11 and asparagine 23. 7 helical membrane passes run 48–68 (LLLLIPNVLFLIFLLWKLPSA), 76–96 (SSPIFITFYILVFVVALVGIA), 123–143 (FFLLAIELSVIILGLAFGHLE), 151–171 (VLAITTVLSLAYSVTQGTLEI), 192–212 (QFWLVSSCFFFLVYSLVVILP), 234–254 (ILALLNLLQGLGSVLLCFDII), and 265–285 (FLYFSFFAPLIYVAFLRGFFG). N-linked (GlcNAc...) asparagine glycosylation is present at asparagine 361.

This sequence belongs to the UPF0359 family. Ubiquitous, with higher levels in heart, placenta and kidney.

It localises to the membrane. The sequence is that of Transmembrane protein adipocyte-associated 1 (TPRA1) from Homo sapiens (Human).